Consider the following 822-residue polypeptide: MNGHISNHPSSFEMYPSQMNGYGSSPTFSQMDREHGSKTSAKALYEQRKNYARDSVSSVSDISQYRVEHLTTFVLDRKDAMITVDDGIRKLKLLDAKGKVWTQDMILQVDDRAVSLIDLESKNELENFPLNTIQHCQAVMHSCSYDSVLALVCKEPTQNKPDLHLFQCDEVKANLISEDIESAISDSKGGKQKRRPDALRMISNADPGIPPPPRAPAPAPPGTVTQVDVRSRVAAWSAWAADQGDFEKPRQYHEQEETPEMMAARIDRDVQILNHILDDIEFFITKLQKAAEAFSELSKRKKNKKGKRKGPGEGVLTLRAKPPPPDEFLDCFQKFKHGFNLLAKLKSHIQNPSAADLVHFLFTPLNMVVQATGGPELASSVLSPLLNKDTIDFLNYTVNGDERQLWMSLGGTWTKARAEWPKEQFIPPYVPRFRNGWEPPMLNFMGATMEQDLYQLAESVANVAEHQRKQEIKRLSTEHSSVSEYHPADGYAFSSNIYTRGSHLDQGEAAVAFKPTSNRHIDRNYEPLKTQPKKYAKSKYDFVARNNSELSVLKDDILEILDDRKQWWKVRNASGDSGFVPNNILDIVRPPESGLGRADPPYTHTIQKQRMEYGPRPADTPPAPSPPPTPAPVPVPLPPSTPAPVPVSKFPANITRQNSSSSDSGGSIVRDSQRHKQLPVDRRKSQMEEVQDELIHRLTIGRSAAQKKFHVPRQNVPVINITYDSTPEDVKTWLQSKGFNPVTVNSLGVLNGAQLFSLNKDELRTVCPEGARVYSQITVQKAALEDSSGSSELQEIMRRRQEKISAAASDSGVESFDEGSSH.

Polar residues-rich tracts occupy residues 1–10 and 17–30; these read MNGHISNHPS and SQMNGYGSSPTFSQ. The tract at residues 1–39 is disordered; that stretch reads MNGHISNHPSSFEMYPSQMNGYGSSPTFSQMDREHGSKT. Ser58 bears the Phosphoserine mark. Residues 64–194 enclose the PTB domain; the sequence is QYRVEHLTTF…SDSKGGKQKR (131 aa). Disordered regions lie at residues 201–225 and 298–320; these read MISNADPGIPPPPRAPAPAPPGTVT and SKRKKNKKGKRKGPGEGVLTLRA. Pro residues predominate over residues 208–221; that stretch reads GIPPPPRAPAPAPP. Thr223 carries the phosphothreonine modification. Residues 299 to 309 are compositionally biased toward basic residues; sequence KRKKNKKGKRK. Thr317 is modified (phosphothreonine). A Phosphoserine modification is found at Ser476. An SH3 domain is found at 531–590; sequence QPKKYAKSKYDFVARNNSELSVLKDDILEILDDRKQWWKVRNASGDSGFVPNNILDIVRP. The segment at 612 to 689 is disordered; sequence EYGPRPADTP…VDRRKSQMEE (78 aa). A compositionally biased stretch (pro residues) spans 618–645; it reads ADTPPAPSPPPTPAPVPVPLPPSTPAPV. Ser625 carries the post-translational modification Phosphoserine; by MAPK. Thr629 carries the phosphothreonine; by MAPK modification. Positions 649 to 822 are effector region; that stretch reads KFPANITRQN…VESFDEGSSH (174 aa). Ser659, Ser662, and Ser685 each carry phosphoserine. The span at 671-687 shows a compositional bias: basic and acidic residues; the sequence is DSQRHKQLPVDRRKSQM. The tract at residues 680-698 is amphipathic helix; sequence VDRRKSQMEEVQDELIHRL. Helix bundle stretches follow at residues 718–738, 752–757, 762–767, and 766–785; these read VINITYDSTPEDVKTWLQSKG, GAQLFS, ELRTVC, and VCPEGARVYSQITVQKAALE. Positions 787–822 are disordered; that stretch reads SSGSSELQEIMRRRQEKISAAASDSGVESFDEGSSH. Phosphoserine occurs at positions 811 and 815.

It belongs to the EPS8 family. Homodimer. Part of a complex consisting of ABI1, EPS8 and SOS1. Interacts with BAIAP2. Interacts with SHB and LANCL1. Interacts with EGFR; mediates EPS8 phosphorylation. Interacts with MYO15A and WHRN. Ubiquitinated by the SCF(FBXW5) E3 ubiquitin-protein ligase complex during G2 phase, leading to its transient degradation and subsequent cell shape changes required to allow mitotic progression. Reappears at the midzone of dividing cells. Post-translationally, phosphorylation at Ser-625 and Thr-629 by MAPK following BDNF treatment promotes removal from actin and filopodia formation. Phosphorylated by several receptor tyrosine kinases.

The protein localises to the cytoplasm. It is found in the cell cortex. The protein resides in the cell projection. It localises to the ruffle membrane. Its subcellular location is the growth cone. The protein localises to the stereocilium. It is found in the synapse. The protein resides in the synaptosome. In terms of biological role, signaling adapter that controls various cellular protrusions by regulating actin cytoskeleton dynamics and architecture. Depending on its association with other signal transducers, can regulate different processes. Together with SOS1 and ABI1, forms a trimeric complex that participates in transduction of signals from Ras to Rac by activating the Rac-specific guanine nucleotide exchange factor (GEF) activity. Acts as a direct regulator of actin dynamics by binding actin filaments and has both barbed-end actin filament capping and actin bundling activities depending on the context. Displays barbed-end actin capping activity when associated with ABI1, thereby regulating actin-based motility process: capping activity is auto-inhibited and inhibition is relieved upon ABI1 interaction. Also shows actin bundling activity when associated with BAIAP2, enhancing BAIAP2-dependent membrane extensions and promoting filopodial protrusions. Involved in the regulation of processes such as axonal filopodia growth, stereocilia length, dendritic cell migration and cancer cell migration and invasion. Acts as a regulator of axonal filopodia formation in neurons: in the absence of neurotrophic factors, negatively regulates axonal filopodia formation via actin-capping activity. In contrast, it is phosphorylated in the presence of BDNF leading to inhibition of its actin-capping activity and stimulation of filopodia formation. Component of a complex with WHRN and MYO15A that localizes at stereocilia tips and is required for elongation of the stereocilia actin core. Indirectly involved in cell cycle progression; its degradation following ubiquitination being required during G2 phase to promote cell shape changes. The polypeptide is Epidermal growth factor receptor kinase substrate 8 (EPS8) (Pongo abelii (Sumatran orangutan)).